The sequence spans 539 residues: Eukaryotic translation initiation factor 3 subunit L (539 aa).

Residues Thr306 to His514 form the PCI domain.

The protein belongs to the eIF-3 subunit L family. Component of the eukaryotic translation initiation factor 3 (eIF-3) complex. The eIF-3 complex interacts with pix.

It localises to the cytoplasm. Component of the eukaryotic translation initiation factor 3 (eIF-3) complex, which is involved in protein synthesis of a specialized repertoire of mRNAs and, together with other initiation factors, stimulates binding of mRNA and methionyl-tRNAi to the 40S ribosome. The eIF-3 complex specifically targets and initiates translation of a subset of mRNAs involved in cell proliferation. The sequence is that of Eukaryotic translation initiation factor 3 subunit L from Drosophila ananassae (Fruit fly).